A 189-amino-acid chain; its full sequence is dCTP deaminase (189 aa).

DCTP-binding positions include 112 to 117 (KSTYAR), 136 to 138 (TLE), Gln-157, Tyr-171, and Gln-181. Glu-138 serves as the catalytic Proton donor/acceptor.

Belongs to the dCTP deaminase family. Homotrimer.

The catalysed reaction is dCTP + H2O + H(+) = dUTP + NH4(+). It functions in the pathway pyrimidine metabolism; dUMP biosynthesis; dUMP from dCTP (dUTP route): step 1/2. Catalyzes the deamination of dCTP to dUTP. In Teredinibacter turnerae (strain ATCC 39867 / T7901), this protein is dCTP deaminase.